Here is a 302-residue protein sequence, read N- to C-terminus: 33 kDa chaperonin (302 aa).

Intrachain disulfides connect C240-C242 and C273-C276.

This sequence belongs to the HSP33 family. Post-translationally, under oxidizing conditions two disulfide bonds are formed involving the reactive cysteines. Under reducing conditions zinc is bound to the reactive cysteines and the protein is inactive.

The protein resides in the cytoplasm. In terms of biological role, redox regulated molecular chaperone. Protects both thermally unfolding and oxidatively damaged proteins from irreversible aggregation. Plays an important role in the bacterial defense system toward oxidative stress. The sequence is that of 33 kDa chaperonin from Synechocystis sp. (strain ATCC 27184 / PCC 6803 / Kazusa).